A 256-amino-acid chain; its full sequence is Non-specific lipid transfer protein GPI-anchored 23 (256 aa).

A signal peptide spans 1 to 21 (MKPSFVLLSIVLLLSSSLSDA). An N-linked (GlcNAc...) asparagine glycan is attached at Asn-41. 4 disulfides stabilise this stretch: Cys-45-Cys-88, Cys-55-Cys-72, Cys-73-Cys-113, and Cys-86-Cys-121. Positions 125–230 (TPAASTPVSP…SPSPSPSPSI (106 aa)) are disordered. Low complexity predominate over residues 138–230 (SPTTSPSSAK…SPSPSPSPSI (93 aa)). Ser-225 carries the GPI-anchor amidated serine lipid modification. Positions 226–256 (PSPSISSSGILLVSKLFIAVVMVSSFLYILA) are cleaved as a propeptide — removed in mature form.

Belongs to the plant LTP family. Confined to the anthers of the inflorescence.

Its subcellular location is the cell membrane. Its function is as follows. Probable lipid transfer protein. This is Non-specific lipid transfer protein GPI-anchored 23 from Arabidopsis thaliana (Mouse-ear cress).